Consider the following 618-residue polypeptide: Chaperone protein DnaK (618 aa).

Residue Thr-175 is modified to Phosphothreonine; by autocatalysis. The interval 576 to 618 (SQNAEPGADGGANSGANPGGTTGNTDTKDDNVVDAEYKVDDDK) is disordered. A compositionally biased stretch (gly residues) spans 583–597 (ADGGANSGANPGGTT). The span at 601–618 (DTKDDNVVDAEYKVDDDK) shows a compositional bias: basic and acidic residues.

The protein belongs to the heat shock protein 70 family.

Acts as a chaperone. In Clostridium kluyveri (strain NBRC 12016), this protein is Chaperone protein DnaK.